Consider the following 180-residue polypeptide: Inorganic pyrophosphatase (180 aa).

The substrate site is built by Lys28, Arg42, and Tyr54. Positions 66, 71, and 102 each coordinate Mg(2+). Tyr139 lines the substrate pocket.

Belongs to the PPase family. As to quaternary structure, homohexamer. Requires Mg(2+) as cofactor.

It is found in the cytoplasm. It carries out the reaction diphosphate + H2O = 2 phosphate + H(+). Functionally, hydrolyzes PPi generated in anabolic reactions. In terms of biological role, catalyzes the hydrolysis of inorganic pyrophosphate (PPi) forming two phosphate ions. This is Inorganic pyrophosphatase from Pseudanabaena sp. (strain PCC 6903).